We begin with the raw amino-acid sequence, 591 residues long: Formate--tetrahydrofolate ligase (591 aa).

Residue 74 to 81 (TPLGEGKS) coordinates ATP.

This sequence belongs to the formate--tetrahydrofolate ligase family.

The catalysed reaction is (6S)-5,6,7,8-tetrahydrofolate + formate + ATP = (6R)-10-formyltetrahydrofolate + ADP + phosphate. The protein operates within one-carbon metabolism; tetrahydrofolate interconversion. The sequence is that of Formate--tetrahydrofolate ligase from Lawsonia intracellularis (strain PHE/MN1-00).